Consider the following 723-residue polypeptide: Probable dipeptidyl-peptidase 5 (723 aa).

Positions 1 to 19 (MAALRWLSAVVAVSTTVLA) are cleaved as a signal peptide. N-linked (GlcNAc...) asparagine glycosylation is found at asparagine 79, asparagine 97, asparagine 154, asparagine 255, asparagine 381, and asparagine 451. Serine 561 functions as the Charge relay system in the catalytic mechanism. Asparagine 608 carries N-linked (GlcNAc...) asparagine glycosylation. Active-site charge relay system residues include aspartate 644 and histidine 676.

Belongs to the peptidase S9C family.

The protein localises to the secreted. Extracellular dipeptidyl-peptidase which removes N-terminal dipeptides sequentially from polypeptides having unsubstituted N-termini. This is Probable dipeptidyl-peptidase 5 (dpp5) from Aspergillus terreus (strain NIH 2624 / FGSC A1156).